We begin with the raw amino-acid sequence, 561 residues long: Solute carrier family 41 member 2 (561 aa).

At 1–150 (MTANTGEPYK…KESSIAMALQ (150 aa)) the chain is on the extracellular side. Residues 151–171 (ILVPFLLAGFGTVSAGMVLDI) traverse the membrane as a helical segment. Residues 172-183 (VQHWDVFKNLTE) lie on the Cytoplasmic side of the membrane. Residues 184–204 (VFILVPALLGLKGNLEMTLAS) form a helical membrane-spanning segment. At 205 to 233 (RLSTAVNVGKMDSPIEKWNLIIGNLALKQ) the chain is on the extracellular side. The chain crosses the membrane as a helical span at residues 234-254 (VQATVVGFLAAVFAVILGWIP). Residues 255–270 (DGKYQLDHAILLCSSS) lie on the Cytoplasmic side of the membrane. Residues 271–291 (VATAFIASLLQGIIMVGVIVG) traverse the membrane as a helical segment. At 292–301 (SKKTGINPDN) the chain is on the extracellular side. The chain crosses the membrane as a helical span at residues 302 to 322 (VATPIAASFGDLITLAILAWI). The Cytoplasmic segment spans residues 323 to 333 (SQGLYNCLGSY). A helical transmembrane segment spans residues 334–354 (AFVSPLVGVFFLAMTPIWIVI). The Extracellular portion of the chain corresponds to 355 to 364 (ASKHPATRTV). The chain crosses the membrane as a helical span at residues 365 to 385 (LHSGWEPVITAMLISSIGGLI). At 386-394 (LDTTVSDPN) the chain is on the cytoplasmic side. The chain crosses the membrane as a helical span at residues 395-415 (LVGIVVYTPVINGIGGNLVAI). Residues 416–457 (QASRISTYLHLYSIPGELPEDAKGCYHPCRTFCGTGVNNKSA) are Extracellular-facing. A helical membrane pass occupies residues 458 to 478 (QVLLSLVIPGHLIFLYTIYLM). The Cytoplasmic segment spans residues 479–487 (KSGHTSLTP). A helical transmembrane segment spans residues 488-508 (IFVAVYLLAALLQVFALLWIA). Topologically, residues 509-531 (DWMVHHIWRKGKDPDSFSIPYLT) are extracellular. A helical membrane pass occupies residues 532-552 (ALGDLLGTALLAISFHILWII). At 553 to 561 (GDRDGDVGD) the chain is on the cytoplasmic side.

The protein belongs to the SLC41A transporter family.

It is found in the cell membrane. It carries out the reaction Mg(2+)(in) = Mg(2+)(out). The catalysed reaction is Mn(2+)(in) = Mn(2+)(out). It catalyses the reaction Co(2+)(in) = Co(2+)(out). The enzyme catalyses Ni(2+)(in) = Ni(2+)(out). It carries out the reaction Fe(2+)(in) = Fe(2+)(out). Acts as a plasma-membrane magnesium transporter. Can also mediate the transport of other divalent metal cations in an order of Ba(2+) &gt; Ni(2+) &gt; Co(2+) &gt; Fe(2+) &gt; Mn(2+). The sequence is that of Solute carrier family 41 member 2 (slc41a2) from Xenopus laevis (African clawed frog).